The chain runs to 826 residues: Beta-galactosidase 7 (826 aa).

Residues 1–25 (MKMKHFTRLLSLFFILITSLSLAKS) form the signal peptide. A glycan (N-linked (GlcNAc...) asparagine) is linked at asparagine 154. The Proton donor role is filled by glutamate 184. The Nucleophile role is filled by glutamate 253. Residues asparagine 254, asparagine 351, asparagine 380, asparagine 491, asparagine 665, asparagine 706, asparagine 797, and asparagine 801 are each glycosylated (N-linked (GlcNAc...) asparagine). The SUEL-type lectin domain occupies 740 to 826 (AHEHNKVELS…PKKLAVELEC (87 aa)).

Belongs to the glycosyl hydrolase 35 family. As to expression, expressed in flowers.

Its subcellular location is the secreted. It localises to the extracellular space. The protein localises to the apoplast. The catalysed reaction is Hydrolysis of terminal non-reducing beta-D-galactose residues in beta-D-galactosides.. This Arabidopsis thaliana (Mouse-ear cress) protein is Beta-galactosidase 7 (BGAL7).